Here is a 237-residue protein sequence, read N- to C-terminus: Protein lin-31 (237 aa).

The fork-head DNA-binding region spans 12–103 (QKPPYSYIWL…SGMFENGSCL (92 aa)). Disordered regions lie at residues 110-141 (RARG…LLPE) and 195-237 (NFES…ILSS). 2 stretches are compositionally biased toward low complexity: residues 206–216 (SEISGSGSSSS) and 227–237 (SSFSIESILSS).

Its subcellular location is the nucleus. In terms of biological role, lin-31 regulates how vulval precursor cells choose their fate. It helps specify three alternative cell fates in vulval development. The polypeptide is Protein lin-31 (lin-31) (Caenorhabditis elegans).